Consider the following 657-residue polypeptide: UvrABC system protein B (657 aa).

In terms of domain architecture, Helicase ATP-binding spans 24–409 (AGVRNQVKSQ…SGHIVQQIIR (386 aa)). Position 37 to 44 (37 to 44 (GTTGSGKT)) interacts with ATP. The short motif at 90–113 (YYDYYQPEAYIARSDTYIEKSLLI) is the Beta-hairpin element. The 164-residue stretch at 426–589 (QVDDLLEEIR…IVPKPIIKAI (164 aa)) folds into the Helicase C-terminal domain. The 36-residue stretch at 617–652 (EEQIKKYEALMQRAAKEFRFNEAAKYRDAMQACKEQ) folds into the UVR domain.

The protein belongs to the UvrB family. Forms a heterotetramer with UvrA during the search for lesions. Interacts with UvrC in an incision complex.

The protein localises to the cytoplasm. Its function is as follows. The UvrABC repair system catalyzes the recognition and processing of DNA lesions. A damage recognition complex composed of 2 UvrA and 2 UvrB subunits scans DNA for abnormalities. Upon binding of the UvrA(2)B(2) complex to a putative damaged site, the DNA wraps around one UvrB monomer. DNA wrap is dependent on ATP binding by UvrB and probably causes local melting of the DNA helix, facilitating insertion of UvrB beta-hairpin between the DNA strands. Then UvrB probes one DNA strand for the presence of a lesion. If a lesion is found the UvrA subunits dissociate and the UvrB-DNA preincision complex is formed. This complex is subsequently bound by UvrC and the second UvrB is released. If no lesion is found, the DNA wraps around the other UvrB subunit that will check the other stand for damage. The chain is UvrABC system protein B from Chlamydia pneumoniae (Chlamydophila pneumoniae).